We begin with the raw amino-acid sequence, 800 residues long: Putative antiporter subunit mnhA2 (800 aa).

21 helical membrane passes run 1-21 (MSLV…LFTL), 29-49 (VAGY…IMKI), 78-98 (GLSL…FFYA), 109-129 (LPRF…IVIA), 133-153 (ILMY…ISYW), 167-187 (FMIT…LYII), 209-229 (FIPM…QFPF), 241-261 (TPVS…FLLF), 272-292 (VYIY…SLTA), 300-320 (GILA…VGLG), 336-356 (ILVL…KCAL), 387-407 (IVML…GFLS), 424-444 (YGFV…ILTF), 472-492 (PWLF…IFFV), 528-548 (VNLP…LALV), 595-615 (IMIT…TVGF), 627-647 (GPLE…LIFI), 651-671 (LTMV…FIAM), 676-696 (LALT…VSFS), 712-732 (TFKI…IFVA), and 768-788 (LDTM…YTLL).

It belongs to the CPA3 antiporters (TC 2.A.63) subunit A family. In terms of assembly, may form a heterooligomeric complex that consists of seven subunits: mnhA2, mnhB2, mnhC2, mnhD2, mnhE2, mnhF2 and mnhG2.

It is found in the cell membrane. This chain is Putative antiporter subunit mnhA2 (mnhA2), found in Staphylococcus epidermidis (strain ATCC 12228 / FDA PCI 1200).